We begin with the raw amino-acid sequence, 659 residues long: ATP-binding cassette sub-family D member 3 (659 aa).

Residues 2–61 (AAFSKYLTARNSSLAGAAFLLFCLLHKRRRALGLHGKKSGKPPLQNNEKEGKKERAVVDK) form an interaction with PEX19 region. An N-linked (GlcNAc...) asparagine glycan is attached at Asn-12. The residue at position 61 (Lys-61) is an N6-acetyllysine. A helical transmembrane segment spans residues 84-104 (GYLILIAVMLVSRTYCDVWMI). In terms of domain architecture, ABC transmembrane type-1 spans 85–372 (YLILIAVMLV…MLLRMSQALG (288 aa)). Residue Asn-106 is glycosylated (N-linked (GlcNAc...) asparagine). Residues 126-146 (LFNFIAAMPLISLVNNFLKYG) traverse the membrane as a helical segment. Asn-206 is a glycosylation site (N-linked (GlcNAc...) asparagine). A helical transmembrane segment spans residues 224–244 (AIGAQGPASMMAYLLVSGLFL). Residue Lys-260 is modified to N6-acetyllysine. A helical membrane pass occupies residues 313-333 (MGFIDSIIAKYIATVVGYLVV). Lys-399 is subject to N6-acetyllysine. At Ser-424 the chain carries Phosphoserine. The ABC transporter domain maps to 434–659 (INADNIIKFD…ITEDTVEFGS (226 aa)). 473-480 (GPNGCGKS) contacts ATP. Lys-533 is modified (N6-acetyllysine). Ser-659 carries the post-translational modification Phosphoserine.

This sequence belongs to the ABC transporter superfamily. ABCD family. Peroxisomal fatty acyl CoA transporter (TC 3.A.1.203) subfamily. As to quaternary structure, homodimers. Can form heterodimers with ABCD1 and ABCD2. Dimerization is necessary to form an active transporter. Interacts with PEX19; mediates the targeting of ABCD3 to peroxisomes. Ubiquitinated by PEX2 during pexophagy in response to starvation, leading to its degradation.

Its subcellular location is the peroxisome membrane. It carries out the reaction a very long-chain fatty acyl-CoA + H2O = a very long-chain fatty acid + CoA + H(+). It catalyses the reaction a very long-chain fatty acid(in) + ATP + H2O = a very long-chain fatty acid(out) + ADP + phosphate + H(+). The catalysed reaction is a long-chain fatty acyl-CoA + H2O = a long-chain fatty acid + CoA + H(+). The enzyme catalyses a long-chain fatty acid(in) + ATP + H2O = a long-chain fatty acid(out) + ADP + phosphate + H(+). It carries out the reaction pristanoyl-CoA + H2O = 2,6,10,14-tetramethylpentadecanoate + CoA + H(+). It catalyses the reaction 2,6,10,14-tetramethylpentadecanoate(in) + ATP + H2O = 2,6,10,14-tetramethylpentadecanoate(out) + ADP + phosphate + H(+). The catalysed reaction is hexadecanedioyl-CoA + H2O = hexadecanedioate + CoA + H(+). The enzyme catalyses hexadecanedioate(in) + ATP + H2O = hexadecanedioate(out) + ADP + phosphate + H(+). It carries out the reaction (5Z,8Z,11Z,14Z,17Z)-eicosapentaenoyl-CoA + H2O = (5Z,8Z,11Z,14Z,17Z)-eicosapentaenoate + CoA + H(+). It catalyses the reaction (5Z,8Z,11Z,14Z,17Z)-eicosapentaenoate(in) + ATP + H2O = (5Z,8Z,11Z,14Z,17Z)-eicosapentaenoate(out) + ADP + phosphate + H(+). The catalysed reaction is (4Z,7Z,10Z,13Z,16Z,19Z)-docosahexaenoyl-CoA + H2O = (4Z,7Z,10Z,13Z,16Z,19Z)-docosahexaenoate + CoA + H(+). The enzyme catalyses (4Z,7Z,10Z,13Z,16Z,19Z)-docosahexaenoate(in) + ATP + H2O = (4Z,7Z,10Z,13Z,16Z,19Z)-docosahexaenoate(out) + ADP + phosphate + H(+). Its function is as follows. Broad substrate specificity ATP-dependent transporter of the ATP-binding cassette (ABC) family that catalyzes the transport of long-chain fatty acids (LCFA)-CoA, dicarboxylic acids-CoA, long-branched-chain fatty acids-CoA and bile acids from the cytosol to the peroxisome lumen for beta-oxydation. Has fatty acyl-CoA thioesterase and ATPase activities. Probably hydrolyzes fatty acyl-CoAs into free fatty acids prior to their ATP-dependent transport into peroxisomes. Thus, play a role in regulation of LCFAs and energy metabolism namely, in the degradation and biosynthesis of fatty acids by beta-oxidation. The protein is ATP-binding cassette sub-family D member 3 (Abcd3) of Rattus norvegicus (Rat).